Reading from the N-terminus, the 203-residue chain is Adenosylcobalamin/alpha-ribazole phosphatase (203 aa).

His8 acts as the Tele-phosphohistidine intermediate in catalysis. Glu81 serves as the catalytic Proton donor/acceptor.

It belongs to the phosphoglycerate mutase family.

It catalyses the reaction adenosylcob(III)alamin 5'-phosphate + H2O = adenosylcob(III)alamin + phosphate. The enzyme catalyses alpha-ribazole 5'-phosphate + H2O = alpha-ribazole + phosphate. The protein operates within nucleoside biosynthesis; alpha-ribazole biosynthesis; alpha-ribazole from 5,6-dimethylbenzimidazole: step 2/2. Catalyzes the conversion of adenosylcobalamin 5'-phosphate to adenosylcobalamin (vitamin B12); involved in the assembly of the nucleotide loop of cobalamin. Also catalyzes the hydrolysis of the phospho group from alpha-ribazole 5'-phosphate to form alpha-ribazole. This chain is Adenosylcobalamin/alpha-ribazole phosphatase (cobC), found in Escherichia coli (strain K12).